We begin with the raw amino-acid sequence, 314 residues long: 3'-5' exoribonuclease YhaM (314 aa).

The 117-residue stretch at H163 to K279 folds into the HD domain.

This sequence belongs to the YhaM family.

Shows a 3'-5' exoribonuclease activity. This chain is 3'-5' exoribonuclease YhaM, found in Bacillus pumilus (strain SAFR-032).